The sequence spans 173 residues: MDITIQHPWFKRALGSLYPSRLFDQFFGEGLFEYDLLPFLSSTISPYYRQSLFRTVLESGISEVRSDRDKFVIFLDVKHFSPEDLTVKVLDDFVEIHGKHSERQDDHGYISREFHRRYRLPSNVDQSAISCSLSADGMLTFSGPKIHSDMDASHSDRSIPVSREEKPTLAPSS.

M1 carries the post-translational modification N-acetylmethionine. Residues M1–E63 are required for complex formation with BFSP1 and BFSP2. Q6 is subject to Deamidated glutamine; partial. S45 carries the phosphoserine modification. Q50 carries the deamidated glutamine; partial modification. One can recognise a sHSP domain in the interval L52–E164. Residues K70 and K99 each carry the N6-acetyllysine modification. Residues H100, E102, and H107 each contribute to the Zn(2+) site. S122 is modified (phosphoserine). N123 bears the Deamidated asparagine; partial mark. Over residues I146–P167 the composition is skewed to basic and acidic residues. The interval I146 to S173 is disordered. Zn(2+) is bound at residue H154. S162 carries an O-linked (GlcNAc) serine glycan.

It belongs to the small heat shock protein (HSP20) family. Heteromer composed of three CRYAA and one CRYAB subunits. Inter-subunit bridging via zinc ions enhances stability, which is crucial as there is no protein turn over in the lens. Can also form homodimers and homotetramers (dimers of dimers) which serve as the building blocks of homooligomers. Within homooligomers, the zinc-binding motif is created from residues of 3 different molecules. His-100 and Glu-102 from one molecule are ligands of the zinc ion, and His-107 and His-154 residues from additional molecules complete the site with tetrahedral coordination geometry. Part of a complex required for lens intermediate filament formation composed of BFSP1, BFSP2 and CRYAA. Post-translationally, acetylation at Lys-70 may increase chaperone activity. In terms of processing, undergoes age-dependent proteolytical cleavage at the C-terminus.

The protein localises to the cytoplasm. It localises to the nucleus. Contributes to the transparency and refractive index of the lens. Acts as a chaperone, preventing aggregation of various proteins under a wide range of stress conditions. Required for the correct formation of lens intermediate filaments as part of a complex composed of BFSP1, BFSP2 and CRYAA. In Osphranter rufus (Red kangaroo), this protein is Alpha-crystallin A chain (CRYAA).